Consider the following 129-residue polypeptide: Transcription factor bHLH138 (129 aa).

The segment covering 1–18 (MERYTKKNERFKAEEGKG) has biased composition (basic and acidic residues). The disordered stretch occupies residues 1 to 24 (MERYTKKNERFKAEEGKGSKKSRT). Residues 19-68 (SKKSRTFLTERERRALFNDRFFDLKNLIPNPTKGGEASIVQDGIVYINEL) enclose the bHLH domain.

It belongs to the bHLH protein family.

It localises to the nucleus. This is Transcription factor bHLH138 from Arabidopsis thaliana (Mouse-ear cress).